Here is a 506-residue protein sequence, read N- to C-terminus: Anaerobic nitric oxide reductase transcription regulator NorR (506 aa).

Asp57 is subject to 4-aspartylphosphate. One can recognise a Sigma-54 factor interaction domain in the interval 187–416 (MIGLSPNMMQ…LEHAIHRAVV (230 aa)). Residues 215–222 (GETGTGKE) and 278–287 (ADNGTLFLDE) each bind ATP. Residues 481–500 (WAACARALETDVANLHRLAK) constitute a DNA-binding region (H-T-H motif).

It participates in nitrogen metabolism; nitric oxide reduction. Required for the expression of anaerobic nitric oxide (NO) reductase, acts as a transcriptional activator for at least the norVW operon. Activation also requires sigma-54. This Citrobacter koseri (strain ATCC BAA-895 / CDC 4225-83 / SGSC4696) protein is Anaerobic nitric oxide reductase transcription regulator NorR.